A 543-amino-acid polypeptide reads, in one-letter code: CTP synthase (543 aa).

The segment at 1 to 265 (MTRYIFVTGG…DDIVVERFGL (265 aa)) is amidoligase domain. Ser-13 lines the CTP pocket. Ser-13 is a binding site for UTP. ATP contacts are provided by residues 14 to 19 (SLGKGI) and Asp-71. Positions 71 and 139 each coordinate Mg(2+). Residues 146–148 (DIE), 186–191 (KTKPTQ), and Lys-222 contribute to the CTP site. Residues 186–191 (KTKPTQ) and Lys-222 each bind UTP. The Glutamine amidotransferase type-1 domain maps to 290 to 541 (TIAMVGKYME…VNAALAQKAR (252 aa)). Gly-351 serves as a coordination point for L-glutamine. Residue Cys-378 is the Nucleophile; for glutamine hydrolysis of the active site. Residues 379–382 (LGMQ), Glu-402, and Arg-469 contribute to the L-glutamine site. Catalysis depends on residues His-514 and Glu-516.

This sequence belongs to the CTP synthase family. In terms of assembly, homotetramer.

It catalyses the reaction UTP + L-glutamine + ATP + H2O = CTP + L-glutamate + ADP + phosphate + 2 H(+). The catalysed reaction is L-glutamine + H2O = L-glutamate + NH4(+). It carries out the reaction UTP + NH4(+) + ATP = CTP + ADP + phosphate + 2 H(+). It participates in pyrimidine metabolism; CTP biosynthesis via de novo pathway; CTP from UDP: step 2/2. Allosterically activated by GTP, when glutamine is the substrate; GTP has no effect on the reaction when ammonia is the substrate. The allosteric effector GTP functions by stabilizing the protein conformation that binds the tetrahedral intermediate(s) formed during glutamine hydrolysis. Inhibited by the product CTP, via allosteric rather than competitive inhibition. In terms of biological role, catalyzes the ATP-dependent amination of UTP to CTP with either L-glutamine or ammonia as the source of nitrogen. Regulates intracellular CTP levels through interactions with the four ribonucleotide triphosphates. This is CTP synthase from Azotobacter vinelandii (strain DJ / ATCC BAA-1303).